A 70-amino-acid chain; its full sequence is ATP synthase subunit c (70 aa).

A run of 2 helical transmembrane segments spans residues 1–21 and 47–67; these read MNFLAAAIAAGLAAFAASYGN and FIGVGLIEAVPILSIVVSFLI.

Belongs to the ATPase C chain family. As to quaternary structure, F-type ATPases have 2 components, F(1) - the catalytic core - and F(0) - the membrane proton channel. F(1) has five subunits: alpha(3), beta(3), gamma(1), delta(1), epsilon(1). F(0) has three main subunits: a(1), b(2) and c(10-14). The alpha and beta chains form an alternating ring which encloses part of the gamma chain. F(1) is attached to F(0) by a central stalk formed by the gamma and epsilon chains, while a peripheral stalk is formed by the delta and b chains.

The protein resides in the cell membrane. Its function is as follows. F(1)F(0) ATP synthase produces ATP from ADP in the presence of a proton or sodium gradient. F-type ATPases consist of two structural domains, F(1) containing the extramembraneous catalytic core and F(0) containing the membrane proton channel, linked together by a central stalk and a peripheral stalk. During catalysis, ATP synthesis in the catalytic domain of F(1) is coupled via a rotary mechanism of the central stalk subunits to proton translocation. Key component of the F(0) channel; it plays a direct role in translocation across the membrane. A homomeric c-ring of between 10-14 subunits forms the central stalk rotor element with the F(1) delta and epsilon subunits. This chain is ATP synthase subunit c, found in Latilactobacillus sakei subsp. sakei (strain 23K) (Lactobacillus sakei subsp. sakei).